Reading from the N-terminus, the 424-residue chain is L-glutamine:2-deoxy-scyllo-inosose aminotransferase (424 aa).

N6-(pyridoxal phosphate)lysine is present on K202.

This sequence belongs to the DegT/DnrJ/EryC1 family. L-glutamine:2-deoxy-scyllo-inosose/scyllo-inosose aminotransferase subfamily. Requires pyridoxal 5'-phosphate as cofactor.

It carries out the reaction 2-deoxy-L-scyllo-inosose + L-glutamine = 2-deoxy-scyllo-inosamine + 2-oxoglutaramate. The catalysed reaction is 3-amino-2,3-dideoxy-scyllo-inosose + L-glutamine = 2-deoxystreptamine + 2-oxoglutaramate. The protein operates within metabolic intermediate biosynthesis; 2-deoxystreptamine biosynthesis; 2-deoxystreptamine from D-glucose 6-phosphate: step 2/4. Its pathway is metabolic intermediate biosynthesis; 2-deoxystreptamine biosynthesis; 2-deoxystreptamine from D-glucose 6-phosphate: step 4/4. It functions in the pathway antibiotic biosynthesis; neomycin biosynthesis. Catalyzes the PLP-dependent transamination of 2-deoxy-scyllo-inosose (2-DOI) to form 2-deoxy-scyllo-inosamine (2-DOIA) using L-glutamine as the amino donor. Also catalyzes the transamination of 3-amino-2,3-dideoxy-scyllo-inosose (keto-2-DOIA) into 2-deoxystreptamine (2-DOS). This chain is L-glutamine:2-deoxy-scyllo-inosose aminotransferase (neoB), found in Streptomyces fradiae (Streptomyces roseoflavus).